We begin with the raw amino-acid sequence, 758 residues long: Calpain (758 aa).

The region spanning 99–397 is the Calpain catalytic domain; it reads LWEDPDFPAN…FSRVEVCHLG (299 aa). Residues cysteine 154, histidine 313, and asparagine 337 contribute to the active site. The tract at residues 398 to 562 is domain III; it reads LESLEYNQNF…TSITEQELDE (165 aa). The interval 563-582 is linker; sequence DNTNQGLPDDVIEALKLEDT. A domain IV region spans residues 583-757; sequence LLDEDQEIEQ…AEDYLRFSVY (175 aa). 10 residues coordinate Ca(2+): aspartate 641, asparagine 643, threonine 645, histidine 647, glutamate 652, aspartate 671, aspartate 673, serine 675, tyrosine 677, and glutamate 682. EF-hand domains follow at residues 658–693 and 694–729; these read IQAKGWKHIFIKHDVDQSGYFSAYEFREALNDAGYH and VSNRLINAIINRYQDPGTDKISFEDFMLCMVRLKTA.

This sequence belongs to the peptidase C2 family.

Activated by free cytoplasmic calcium. Its function is as follows. Calpains are calcium-activated non-lysosomal thiol-proteases. The polypeptide is Calpain (Schistosoma mansoni (Blood fluke)).